The sequence spans 443 residues: MVKERKTELVEGFRHSVPYINTHRGKTFVIMLGGEAIEHENFSSIVNDIGLLHSLGIRLVVVYGARPQIDANLAAHHHEPLYHKNIRVTDAKTLELVKQAAGTLQLDITARLSMSLNNTPLQGAHINVVSGNFIIAQPLGVDDGVDYCHSGRIRRIDEDAIHRQLDSGAIVLMGPVAVSVTGESFNLTSEEIATQLAIKLKAEKMIGFCSSQGVTNDDGDIVSELFPNEAQARVEAQEEKGDYNSGTVRFLRGAVKACRSGVRRCHLISYQEDGALLQELFSRDGIGTQIVMESAEQIRRATINDIGGILELIRPLEQQGILVRRSREQLEMEIDKFTIIQRDNTTIACAALYPFPEEKIGEMACVAVHPDYRSSSRGEVLLERIAAQAKQSGLSKLFVLTTRSIHWFQERGFTPVDIDLLPESKKQLYNYQRKSKVLMADLG.

The N-acetyltransferase domain maps to 296–443 (EQIRRATIND…KSKVLMADLG (148 aa)).

It belongs to the acetyltransferase family. ArgA subfamily. Homohexamer.

It is found in the cytoplasm. It catalyses the reaction L-glutamate + acetyl-CoA = N-acetyl-L-glutamate + CoA + H(+). It functions in the pathway amino-acid biosynthesis; L-arginine biosynthesis; N(2)-acetyl-L-ornithine from L-glutamate: step 1/4. The chain is Amino-acid acetyltransferase (argA) from Escherichia coli O157:H7.